We begin with the raw amino-acid sequence, 150 residues long: Large ribosomal subunit protein bL9 (150 aa).

Belongs to the bacterial ribosomal protein bL9 family.

Its function is as follows. Binds to the 23S rRNA. The chain is Large ribosomal subunit protein bL9 from Ralstonia pickettii (strain 12J).